A 379-amino-acid chain; its full sequence is Homoserine O-acetyltransferase (379 aa).

An AB hydrolase-1 domain is found at Asn45–Glu355. The active-site Nucleophile is Ser151. Residue Arg220 coordinates substrate. Residues Asp316 and His349 contribute to the active site. A substrate-binding site is contributed by Asp350.

The protein belongs to the AB hydrolase superfamily. MetX family. Homodimer.

It localises to the cytoplasm. The enzyme catalyses L-homoserine + acetyl-CoA = O-acetyl-L-homoserine + CoA. It functions in the pathway amino-acid biosynthesis; L-methionine biosynthesis via de novo pathway; O-acetyl-L-homoserine from L-homoserine: step 1/1. Transfers an acetyl group from acetyl-CoA to L-homoserine, forming acetyl-L-homoserine. The sequence is that of Homoserine O-acetyltransferase from Carboxydothermus hydrogenoformans (strain ATCC BAA-161 / DSM 6008 / Z-2901).